A 71-amino-acid polypeptide reads, in one-letter code: MAEDVRAEIVASVLEVVVSEGDQIGKGDVLVLLESMKMEIPVLAGVAGIVSKVSVSVGDVIQAGDLIAVIS.

One can recognise a Biotinyl-binding domain in the interval 2–71 (AEDVRAEIVA…QAGDLIAVIS (70 aa)). N6-biotinyllysine is present on Lys37.

This is Biotinylated protein TB7.3 homolog from Mycobacterium leprae (strain TN).